The chain runs to 457 residues: Solute carrier family 38 member 6 (457 aa).

N-acetylmethionine is present on Met-1. Phosphoserine occurs at positions 4 and 7. Helical transmembrane passes span 48–68 (FGLS…LGLA), 70–90 (VMAN…ALLA), 112–132 (LGLF…IIIQ), 171–191 (LLII…KIGF), and 192–212 (LGYT…VVVI). An intrachain disulfide couples Cys-219 to Cys-239. 6 helical membrane passes run 251 to 271 (VYAI…LPIY), 289 to 309 (AIAL…LTFY), 328 to 348 (VIVM…APLI), 372 to 392 (SLTT…VPDI), 395 to 415 (VFGV…PGLF), and 432 to 452 (ALFL…LIIF).

The protein belongs to the amino acid/polyamine transporter 2 family. As to expression, expressed exclusively in neurons and not in astrocytes and glia cells. Highly expressed in the synapse. Highly expressed in glutamatergic neurons. Primarily expressed in excitatory neurons, with some minor expression in inhibitory neurons.

The protein resides in the cell membrane. The protein localises to the synapse. The enzyme catalyses L-glutamine(out) = L-glutamine(in). The catalysed reaction is L-glutamate(out) = L-glutamate(in). In terms of biological role, amino acid transporter with an apparent selectivity for L-glutamine and L-glutamate. May facilitate glutamine uptake in excitatory neurons. The transport mechanism remains to be elucidated. In Mus musculus (Mouse), this protein is Solute carrier family 38 member 6.